The following is a 478-amino-acid chain: Septin-4 (478 aa).

The tract at residues 1–115 (MDRSLGWQGN…RSPWGKLDPY (115 aa)) is disordered. Basic and acidic residues predominate over residues 13–26 (PEDRTEAGIKRFLE). The span at 95–108 (APAPLSPSARPRSP) shows a compositional bias: low complexity. Phosphoserine is present on residues Ser117 and Ser118. The Septin-type G domain occupies 141–414 (KGFDFTLMVA…ENYRAQCIQS (274 aa)). A G1 motif region spans residues 151-158 (GESGLGKS). GTP contacts are provided by residues 151–158 (GESGLGKS) and Thr185. The G3 motif stretch occupies residues 208–211 (DTPG). The tract at residues 289-292 (AKAD) is G4 motif. 290–298 (KADTLTPPE) provides a ligand contact to GTP. Ser325 is subject to Phosphoserine. GTP is bound by residues Gly348 and Arg363. The disordered stretch occupies residues 428-448 (LTRESGTDFPIPAVPPGTDPE). Position 432 is a phosphoserine (Ser432). Thr434 carries the post-translational modification Phosphothreonine. Positions 447–478 (PETEKLIREKDEELRRMQEMLHKIQKQMKENY) form a coiled coil.

This sequence belongs to the TRAFAC class TrmE-Era-EngA-EngB-Septin-like GTPase superfamily. Septin GTPase family. Septins polymerize into heterooligomeric protein complexes that form filaments, and can associate with cellular membranes, actin filaments and microtubules. GTPase activity is required for filament formation. Interacts with SEPTIN8. In a mesenchymal cell line, interacts with SEPTIN9 isoform 2 variants HNA Trp-106 and Phe-111, but not the wild type SEPTIN9. Component of a septin core octameric complex consisting of SEPTIN12, SEPTIN7, SEPTIN6 and SEPTIN2 or SEPTIN4 in the order 12-7-6-2-2-6-7-12 or 12-7-6-4-4-6-7-12. Interacts with SEPTIN14 (via C-terminus). Interacts with DYRK1A. Interacts with SLC6A3/DAT and SNCA/alpha-synuclein. Interacts with STX1A; in the striatum. Interacts with XIAP (via BIR3 domain) following the induction of apoptosis. Interacts with AREL1 (via HECT domain); in the cytoplasm following induction of apoptosis. In terms of assembly, part of a complex composed of SEPTIN4 isoform ARTS, XIAP and BCL2, within the complex interacts with both BCL2 (via BH3 domain) and XIAP, ARTS acts as a scaffold protein and stabilizes the complex. Interacts with XIAP (via BIR3 domain) following the induction of apoptosis. Post-translationally, phosphorylated by DYRK1A. In terms of processing, ubiquitinated by AREL1. In terms of tissue distribution, widely expressed in adult and fetal tissues with highest expression in adult brain (at protein level), heart, liver and adrenal gland and fetal heart, kidney, liver and lung. Expressed in presynaptic terminals of dopaminergic neurons projecting from the substantia nigra pars compacta to the striatum (at protein level). Expressed in axonal varicosities in dopaminergic nerve terminals (at protein level). Expressed in the putamen and in the adjacent cerebral cortex (at protein level). Expressed in colonic crypts (at protein level). Also expressed in colorectal cancers and malignant melanomas. Expressed in platelets. As to expression, highly expressed in the brain and heart.

It localises to the cytoplasm. The protein resides in the cell projection. The protein localises to the cilium. It is found in the flagellum. Its subcellular location is the cytoplasmic vesicle. It localises to the secretory vesicle. The protein resides in the axon. The protein localises to the dendrite. It is found in the perikaryon. Its subcellular location is the synapse. It localises to the mitochondrion. The protein resides in the nucleus. Functionally, filament-forming cytoskeletal GTPase. Pro-apoptotic protein involved in LGR5-positive intestinal stem cell and Paneth cell expansion in the intestines, via its interaction with XIAP. May also play a role in the regulation of cell fate in the intestine. Positive regulator of apoptosis involved in hematopoietic stem cell homeostasis; via its interaction with XIAP. Negative regulator of repair and hair follicle regeneration in response to injury, due to inhibition of hair follicle stem cell proliferation, potentially via its interaction with XIAP. Plays an important role in male fertility and sperm motility. During spermiogenesis, essential for the establishment of the annulus (a fibrous ring structure connecting the midpiece and the principal piece of the sperm flagellum) which is a requisite for the structural and mechanical integrity of the sperm. Involved in the migration of cortical neurons and the formation of neuron leading processes during embryonic development. Required for dopaminergic metabolism in presynaptic autoreceptors; potentially via activity as a presynaptic scaffold protein. In terms of biological role, required for the induction of cell death mediated by TGF-beta and possibly by other apoptotic stimuli. Induces apoptosis through binding and inhibition of XIAP resulting in significant reduction in XIAP levels, leading to caspase activation and cell death. Mediates the interaction between BCL2 and XIAP, thereby positively regulating the ubiquitination and degradation of BCL2 and promoting apoptosis. The chain is Septin-4 from Homo sapiens (Human).